Here is a 150-residue protein sequence, read N- to C-terminus: 3-dehydroquinate dehydratase (150 aa).

The active-site Proton acceptor is Y26. Residues N77, H83, and D90 each contribute to the substrate site. The Proton donor role is filled by H103. Substrate is bound by residues 104 to 105 (LS) and R114.

It belongs to the type-II 3-dehydroquinase family. Homododecamer.

The catalysed reaction is 3-dehydroquinate = 3-dehydroshikimate + H2O. It participates in metabolic intermediate biosynthesis; chorismate biosynthesis; chorismate from D-erythrose 4-phosphate and phosphoenolpyruvate: step 3/7. Its function is as follows. Catalyzes a trans-dehydration via an enolate intermediate. This Klebsiella pneumoniae (strain 342) protein is 3-dehydroquinate dehydratase.